A 115-amino-acid chain; its full sequence is Iron-sulfur cluster insertion protein ErpA (115 aa).

The iron-sulfur cluster site is built by cysteine 43, cysteine 107, and cysteine 109.

The protein belongs to the HesB/IscA family. In terms of assembly, homodimer. The cofactor is iron-sulfur cluster.

Its function is as follows. Required for insertion of 4Fe-4S clusters for at least IspG. The polypeptide is Iron-sulfur cluster insertion protein ErpA (Buchnera aphidicola subsp. Baizongia pistaciae (strain Bp)).